A 721-amino-acid chain; its full sequence is Teichoic acid poly(glycerol phosphate) polymerase (721 aa).

CDP-glycerol is bound by residues 443–447 (WHGTP), R511, 545–546 (PT), 582–584 (RMH), 624–625 (SS), and D629.

Belongs to the CDP-glycerol glycerophosphotransferase family.

The protein resides in the cell membrane. It catalyses the reaction 4-O-[(2R)-glycerylphospho]-N-acetyl-beta-D-mannosaminyl-(1-&gt;4)-N-acetyl-alpha-D-glucosaminyl di-trans,octa-cis-undecaprenyl diphosphate + n CDP-glycerol = 4-O-{[(2R)-1-glycerylphospho](n)-(2R)-1-glycerylphospho}-N-acetyl-beta-D-mannosaminyl-(1-&gt;4)-N-acetyl-alpha-D-glucosaminyl undecaprenyl diphosphate + n CMP + n H(+). Its pathway is cell wall biogenesis; poly(glycerol phosphate) teichoic acid biosynthesis. In terms of biological role, responsible for the polymerization of the main chain of the major teichoic acid by sequential transfer of glycerol phosphate units from CDP-glycerol to the disaccharide linkage unit. Synthesizes polymers of approximately 35 glycerol phosphate units in length. The polypeptide is Teichoic acid poly(glycerol phosphate) polymerase (Staphylococcus epidermidis (strain ATCC 35984 / DSM 28319 / BCRC 17069 / CCUG 31568 / BM 3577 / RP62A)).